The chain runs to 86 residues: MAEERNFRKVRRGYVVSDKMDKTITVELEQRSTHPLYGKVVRSTSKVKAHDEHNDAHIGDLVSIMETRPLSKTKRWRLESIIERAK.

The protein belongs to the universal ribosomal protein uS17 family. Part of the 30S ribosomal subunit.

Its function is as follows. One of the primary rRNA binding proteins, it binds specifically to the 5'-end of 16S ribosomal RNA. The protein is Small ribosomal subunit protein uS17 of Bifidobacterium longum (strain DJO10A).